Reading from the N-terminus, the 44-residue chain is Cytochrome b559 subunit beta (44 aa).

The chain crosses the membrane as a helical span at residues 19-35; that stretch reads WLAIHGIAIPTVFFLGA. Position 23 (histidine 23) interacts with heme.

The protein belongs to the PsbE/PsbF family. Heterodimer of an alpha subunit and a beta subunit. PSII is composed of 1 copy each of membrane proteins PsbA, PsbB, PsbC, PsbD, PsbE, PsbF, PsbH, PsbI, PsbJ, PsbK, PsbL, PsbM, PsbT, PsbX, PsbY, PsbZ, Psb30/Ycf12, at least 3 peripheral proteins of the oxygen-evolving complex and a large number of cofactors. It forms dimeric complexes. Requires heme b as cofactor.

The protein resides in the plastid. It localises to the chloroplast thylakoid membrane. Its function is as follows. This b-type cytochrome is tightly associated with the reaction center of photosystem II (PSII). PSII is a light-driven water:plastoquinone oxidoreductase that uses light energy to abstract electrons from H(2)O, generating O(2) and a proton gradient subsequently used for ATP formation. It consists of a core antenna complex that captures photons, and an electron transfer chain that converts photonic excitation into a charge separation. The sequence is that of Cytochrome b559 subunit beta from Gracilaria tenuistipitata var. liui (Red alga).